The sequence spans 185 residues: Peptidyl-tRNA hydrolase (185 aa).

Tyrosine 14 is a tRNA binding site. Histidine 19 functions as the Proton acceptor in the catalytic mechanism. Residues phenylalanine 64, asparagine 66, and asparagine 112 each contribute to the tRNA site.

This sequence belongs to the PTH family. In terms of assembly, monomer.

It is found in the cytoplasm. The catalysed reaction is an N-acyl-L-alpha-aminoacyl-tRNA + H2O = an N-acyl-L-amino acid + a tRNA + H(+). In terms of biological role, hydrolyzes ribosome-free peptidyl-tRNAs (with 1 or more amino acids incorporated), which drop off the ribosome during protein synthesis, or as a result of ribosome stalling. Catalyzes the release of premature peptidyl moieties from peptidyl-tRNA molecules trapped in stalled 50S ribosomal subunits, and thus maintains levels of free tRNAs and 50S ribosomes. The protein is Peptidyl-tRNA hydrolase of Alkaliphilus oremlandii (strain OhILAs) (Clostridium oremlandii (strain OhILAs)).